The sequence spans 266 residues: Glucosamine-6-phosphate deaminase (266 aa).

Catalysis depends on D72, which acts as the Proton acceptor; for enolization step. Residue D141 is the For ring-opening step of the active site. The active-site Proton acceptor; for ring-opening step is H143. E148 acts as the For ring-opening step in catalysis.

It belongs to the glucosamine/galactosamine-6-phosphate isomerase family. NagB subfamily. In terms of assembly, homohexamer.

It carries out the reaction alpha-D-glucosamine 6-phosphate + H2O = beta-D-fructose 6-phosphate + NH4(+). The protein operates within amino-sugar metabolism; N-acetylneuraminate degradation; D-fructose 6-phosphate from N-acetylneuraminate: step 5/5. With respect to regulation, allosterically activated by N-acetylglucosamine 6-phosphate (GlcNAc6P). In terms of biological role, catalyzes the reversible isomerization-deamination of glucosamine 6-phosphate (GlcN6P) to form fructose 6-phosphate (Fru6P) and ammonium ion. This is Glucosamine-6-phosphate deaminase from Serratia proteamaculans (strain 568).